Here is a 325-residue protein sequence, read N- to C-terminus: Ribonuclease Z (325 aa).

Zn(2+)-binding residues include H63, H65, D67, H68, H147, D218, and H276. Catalysis depends on D67, which acts as the Proton acceptor.

It belongs to the RNase Z family. In terms of assembly, homodimer. Requires Zn(2+) as cofactor.

It carries out the reaction Endonucleolytic cleavage of RNA, removing extra 3' nucleotides from tRNA precursor, generating 3' termini of tRNAs. A 3'-hydroxy group is left at the tRNA terminus and a 5'-phosphoryl group is left at the trailer molecule.. Zinc phosphodiesterase, which displays some tRNA 3'-processing endonuclease activity. Probably involved in tRNA maturation, by removing a 3'-trailer from precursor tRNA. This is Ribonuclease Z from Oenococcus oeni (strain ATCC BAA-331 / PSU-1).